A 307-amino-acid chain; its full sequence is UDP-3-O-acyl-N-acetylglucosamine deacetylase (307 aa).

Zn(2+) is bound by residues H78, H241, and D245. H268 functions as the Proton donor in the catalytic mechanism.

Belongs to the LpxC family. Zn(2+) is required as a cofactor.

It catalyses the reaction a UDP-3-O-[(3R)-3-hydroxyacyl]-N-acetyl-alpha-D-glucosamine + H2O = a UDP-3-O-[(3R)-3-hydroxyacyl]-alpha-D-glucosamine + acetate. The protein operates within glycolipid biosynthesis; lipid IV(A) biosynthesis; lipid IV(A) from (3R)-3-hydroxytetradecanoyl-[acyl-carrier-protein] and UDP-N-acetyl-alpha-D-glucosamine: step 2/6. Functionally, catalyzes the hydrolysis of UDP-3-O-myristoyl-N-acetylglucosamine to form UDP-3-O-myristoylglucosamine and acetate, the committed step in lipid A biosynthesis. This is UDP-3-O-acyl-N-acetylglucosamine deacetylase from Verminephrobacter eiseniae (strain EF01-2).